A 201-amino-acid polypeptide reads, in one-letter code: FMN-dependent NADH:quinone oxidoreductase (201 aa).

Residues Ser-10, 16–18, 96–99, and 140–143 each bind FMN; these read SQS, MYNF, and SRGG.

Belongs to the azoreductase type 1 family. As to quaternary structure, homodimer. FMN serves as cofactor.

The catalysed reaction is 2 a quinone + NADH + H(+) = 2 a 1,4-benzosemiquinone + NAD(+). It carries out the reaction N,N-dimethyl-1,4-phenylenediamine + anthranilate + 2 NAD(+) = 2-(4-dimethylaminophenyl)diazenylbenzoate + 2 NADH + 2 H(+). In terms of biological role, quinone reductase that provides resistance to thiol-specific stress caused by electrophilic quinones. Also exhibits azoreductase activity. Catalyzes the reductive cleavage of the azo bond in aromatic azo compounds to the corresponding amines. The protein is FMN-dependent NADH:quinone oxidoreductase of Escherichia coli O9:H4 (strain HS).